Consider the following 346-residue polypeptide: Coproporphyrin III ferrochelatase (346 aa).

Fe-coproporphyrin III contacts are provided by S52 and Y121. Fe(2+)-binding residues include H181 and E264.

It belongs to the ferrochelatase family.

The protein localises to the cytoplasm. It carries out the reaction Fe-coproporphyrin III + 2 H(+) = coproporphyrin III + Fe(2+). Its pathway is porphyrin-containing compound metabolism; protoheme biosynthesis. Functionally, involved in coproporphyrin-dependent heme b biosynthesis. Catalyzes the insertion of ferrous iron into coproporphyrin III to form Fe-coproporphyrin III. This chain is Coproporphyrin III ferrochelatase, found in Mycobacterium sp. (strain KMS).